Reading from the N-terminus, the 148-residue chain is Transcriptional regulator MraZ (148 aa).

2 SpoVT-AbrB domains span residues 5-51 and 80-123; these read VSIL…PEPN and AETL…NAEE.

It belongs to the MraZ family. Forms oligomers.

Its subcellular location is the cytoplasm. The protein resides in the nucleoid. This Chromobacterium violaceum (strain ATCC 12472 / DSM 30191 / JCM 1249 / CCUG 213 / NBRC 12614 / NCIMB 9131 / NCTC 9757 / MK) protein is Transcriptional regulator MraZ.